Consider the following 427-residue polypeptide: Glutamate-1-semialdehyde 2,1-aminomutase (427 aa).

An N6-(pyridoxal phosphate)lysine modification is found at Lys-265.

The protein belongs to the class-III pyridoxal-phosphate-dependent aminotransferase family. HemL subfamily. As to quaternary structure, homodimer. The cofactor is pyridoxal 5'-phosphate.

The protein resides in the cytoplasm. It catalyses the reaction (S)-4-amino-5-oxopentanoate = 5-aminolevulinate. It participates in porphyrin-containing compound metabolism; protoporphyrin-IX biosynthesis; 5-aminolevulinate from L-glutamyl-tRNA(Glu): step 2/2. The sequence is that of Glutamate-1-semialdehyde 2,1-aminomutase from Colwellia psychrerythraea (strain 34H / ATCC BAA-681) (Vibrio psychroerythus).